Consider the following 257-residue polypeptide: Leucine-rich repeat-containing protein 3 (257 aa).

An N-terminal signal peptide occupies residues 1–32 (MGPRGRQSPSSPLAPSQGSCFFILFCLRLGAS). In terms of domain architecture, LRRNT spans 33–64 (CPQSCQCPDHAGAVAVHCSSRGLQEIPRDIPA). LRR repeat units follow at residues 65–86 (NTVL…AFQH), 89–110 (QLRE…AFSG), and 114–135 (GLRL…ALGK). The LRRCT domain maps to 145–198 (NPLHCECALQEALWELKLDPDSVDEIACHTSAQEQFVGKPLIQVLDSGASFCST). Residues 205-225 (VAMLVTMFGWFTMVIAYVVYY) form a helical membrane-spanning segment.

It belongs to the LRRC3 family.

The protein resides in the membrane. The polypeptide is Leucine-rich repeat-containing protein 3 (Lrrc3) (Rattus norvegicus (Rat)).